Consider the following 309-residue polypeptide: Putative rhizopine-binding protein (309 aa).

A signal peptide spans 1–20 (MKKFIIGIAAAVLVSTAAHA).

Belongs to the bacterial solute-binding protein 2 family.

The protein localises to the periplasm. Functionally, involved in rhizopine (L-3-O-methyl-scyllo-inosamine) catabolism. Could be involved in its high affinity transport. The polypeptide is Putative rhizopine-binding protein (mocB) (Rhizobium meliloti (Ensifer meliloti)).